The following is a 248-amino-acid chain: Phosphoadenosine 5'-phosphosulfate reductase (248 aa).

C239 acts as the Nucleophile; cysteine thiosulfonate intermediate in catalysis.

It belongs to the PAPS reductase family. CysH subfamily.

Its subcellular location is the cytoplasm. The catalysed reaction is [thioredoxin]-disulfide + sulfite + adenosine 3',5'-bisphosphate + 2 H(+) = [thioredoxin]-dithiol + 3'-phosphoadenylyl sulfate. It functions in the pathway sulfur metabolism; hydrogen sulfide biosynthesis; sulfite from sulfate: step 3/3. In terms of biological role, catalyzes the formation of sulfite from phosphoadenosine 5'-phosphosulfate (PAPS) using thioredoxin as an electron donor. This Alteromonas mediterranea (strain DSM 17117 / CIP 110805 / LMG 28347 / Deep ecotype) protein is Phosphoadenosine 5'-phosphosulfate reductase.